Consider the following 320-residue polypeptide: Methionyl-tRNA formyltransferase (320 aa).

112–115 (SLLP) contacts (6S)-5,6,7,8-tetrahydrofolate.

The protein belongs to the Fmt family.

The catalysed reaction is L-methionyl-tRNA(fMet) + (6R)-10-formyltetrahydrofolate = N-formyl-L-methionyl-tRNA(fMet) + (6S)-5,6,7,8-tetrahydrofolate + H(+). In terms of biological role, attaches a formyl group to the free amino group of methionyl-tRNA(fMet). The formyl group appears to play a dual role in the initiator identity of N-formylmethionyl-tRNA by promoting its recognition by IF2 and preventing the misappropriation of this tRNA by the elongation apparatus. The chain is Methionyl-tRNA formyltransferase from Allorhizobium ampelinum (strain ATCC BAA-846 / DSM 112012 / S4) (Agrobacterium vitis (strain S4)).